Reading from the N-terminus, the 89-residue chain is OMEGA-ectatommitoxin(02)-Rm1b (89 aa).

An N-terminal signal peptide occupies residues methionine 1–glycine 30. 3 cysteine pairs are disulfide-bonded: cysteine 39/cysteine 52, cysteine 47/cysteine 68, and cysteine 70/cysteine 79. The 38-residue stretch at tyrosine 43–glycine 80 folds into the EGF-like domain.

It belongs to the EGF domain peptide family. As to expression, expressed by the venom gland.

The protein localises to the secreted. Its function is as follows. Ant peptide with probable defensive activity which acts as a potent agonist of the mammalian epidermal growth factor receptor (EGFR). Mimics, both structurally and functionally, vertebrate epidermal growth factor (EGF) peptide hormones. In vivo, intraplantar injection in mice causes long-lasting (several days) hypersensitivity of the injected paw to both mechanical and thermal stimuli. Its long-lasting effect is unusual for venom toxins whose effects are usually immediate. One possible explanation is that it would reduce the duration of a nest attack, discourage future attacks, or enhance the actions of subsequent exposure to other pain-inducing venom peptides. This chain is OMEGA-ectatommitoxin(02)-Rm1b, found in Rhytidoponera metallica (Australian green-headed ant).